The sequence spans 52 residues: KKGVTLREDDRFPCNAGNCACLPLDSYSYTCQSPTSSTANCEGNECRSEADW.

A propeptide spanning residues 1-6 is cleaved from the precursor; it reads KKGVTL. 3 cysteine pairs are disulfide-bonded: cysteine 14–cysteine 31, cysteine 19–cysteine 41, and cysteine 21–cysteine 46.

Expressed by the venom duct.

Its subcellular location is the secreted. Probable neurotoxin with unknown target. Possibly targets ion channels. This is Conotoxin Cal9.2c from Californiconus californicus (California cone).